Here is a 394-residue protein sequence, read N- to C-terminus: NAD(P)H-quinone oxidoreductase subunit H (394 aa).

It belongs to the complex I 49 kDa subunit family. As to quaternary structure, NDH-1 can be composed of about 15 different subunits; different subcomplexes with different compositions have been identified which probably have different functions.

The protein localises to the cellular thylakoid membrane. The catalysed reaction is a plastoquinone + NADH + (n+1) H(+)(in) = a plastoquinol + NAD(+) + n H(+)(out). It carries out the reaction a plastoquinone + NADPH + (n+1) H(+)(in) = a plastoquinol + NADP(+) + n H(+)(out). Its function is as follows. NDH-1 shuttles electrons from an unknown electron donor, via FMN and iron-sulfur (Fe-S) centers, to quinones in the respiratory and/or the photosynthetic chain. The immediate electron acceptor for the enzyme in this species is believed to be plastoquinone. Couples the redox reaction to proton translocation, and thus conserves the redox energy in a proton gradient. Cyanobacterial NDH-1 also plays a role in inorganic carbon-concentration. The sequence is that of NAD(P)H-quinone oxidoreductase subunit H from Synechococcus sp. (strain CC9902).